The chain runs to 214 residues: Outer-membrane lipoprotein LolB (214 aa).

A signal peptide spans 1–25; it reads MNNLKRLTKTIFSCFTLSALLLLAG. A lipid anchor (N-palmitoyl cysteine) is attached at C26. C26 carries the S-diacylglycerol cysteine lipid modification.

This sequence belongs to the LolB family. As to quaternary structure, monomer.

The protein localises to the cell outer membrane. Its function is as follows. Plays a critical role in the incorporation of lipoproteins in the outer membrane after they are released by the LolA protein. The chain is Outer-membrane lipoprotein LolB from Shewanella baltica (strain OS155 / ATCC BAA-1091).